Consider the following 1188-residue polypeptide: Carboxylic acid reductase (1188 aa).

Residues histidine 315, serine 408, 429 to 430 (DG), threonine 434, aspartate 507, 519 to 522 (YVDR), lysine 528, and lysine 629 contribute to the AMP site. The Carrier domain maps to 665–743 (AGERPVIETV…SVAAHIEKER (79 aa)). Serine 702 carries the post-translational modification O-(pantetheine 4'-phosphoryl)serine. NADP(+) is bound by residues 801–804 (NGWL), arginine 828, arginine 838, 868–869 (DF), 894–896 (SGA), serine 934, tyrosine 970, lysine 974, and serine 997.

The protein belongs to the ATP-dependent AMP-binding enzyme family. Carboxylic acid reductase subfamily. The cofactor is pantetheine 4'-phosphate.

The catalysed reaction is a carboxylate + ATP + NADPH + H(+) = an aldehyde + AMP + diphosphate + NADP(+). Catalyzes the ATP- and NADPH-dependent reduction of carboxylic acids to the corresponding aldehydes. Catalyzes the reduction of a very wide range of carboxylic acids, including benzoic acids, heterocyclic, phenylacetic, phenylpropanoic and fatty acid substrates. This Segniliparus rugosus (strain ATCC BAA-974 / DSM 45345 / CCUG 50838 / CIP 108380 / JCM 13579 / CDC 945) protein is Carboxylic acid reductase.